The following is a 604-amino-acid chain: Serine/threonine-protein kinase A-Raf (604 aa).

The 73-residue stretch at 19–91 (GTVKVYLPNK…DGEELIVEVL (73 aa)) folds into the RBD domain. The segment at 98–144 (MHNFVRKTFFSLAFCDFCLKFLFHGFRCQTCGYKFHQHCSSKVPTVC) adopts a Phorbol-ester/DAG-type zinc-finger fold. Zn(2+) contacts are provided by His99, Cys112, Cys115, Cys125, Cys128, His133, Cys136, and Cys144. A phosphoserine mark is found at Ser157 and Ser162. 2 disordered regions span residues 177–222 (NELL…HMVS) and 241–288 (TDAA…EKKK). Thr181 bears the Phosphothreonine mark. A Phosphoserine modification is found at Ser186. Over residues 210–222 (IRSTSTPNVHMVS) the composition is skewed to polar residues. Positions 252–265 (PRGSPSPASVSSGR) are enriched in low complexity. Phosphoserine is present on residues Ser255 and Ser267. A compositionally biased stretch (basic and acidic residues) spans 272-287 (LPSEQRERKSLADEKK). The 261-residue stretch at 308–568 (VQLLKRIGTG…PQILATIELL (261 aa)) folds into the Protein kinase domain. ATP-binding positions include 314-322 (IGTGSFGTV) and Lys334. At Thr316 the chain carries Phosphothreonine. The active-site Proton acceptor is Asp427.

This sequence belongs to the protein kinase superfamily. TKL Ser/Thr protein kinase family. RAF subfamily. In terms of assembly, interacts with TH1L/NELFD. The cofactor is Zn(2+). In terms of processing, dephosphorylation by the SHOC2-MRAS-PP1c (SMP) complex consisting of SHOC2, GTP-bound M-Ras/MRAS and the catalytic subunit of protein phosphatase 1 (PPP1CA, PPP1CB or PPP1CC); this relieves inactivation and stimulates kinase activity.

The catalysed reaction is L-seryl-[protein] + ATP = O-phospho-L-seryl-[protein] + ADP + H(+). It carries out the reaction L-threonyl-[protein] + ATP = O-phospho-L-threonyl-[protein] + ADP + H(+). Functionally, involved in the transduction of mitogenic signals from the cell membrane to the nucleus. May also regulate the TOR signaling cascade. Phosphorylates PFKFB2. The protein is Serine/threonine-protein kinase A-Raf (Araf) of Mus musculus (Mouse).